Reading from the N-terminus, the 367-residue chain is Chorismate synthase (367 aa).

An NADP(+)-binding site is contributed by Arg48. FMN-binding positions include 125–127, 243–244, Gly283, 298–302, and Arg324; these read RSS, NA, and KPTSS.

Belongs to the chorismate synthase family. Homotetramer. Requires FMNH2 as cofactor.

It catalyses the reaction 5-O-(1-carboxyvinyl)-3-phosphoshikimate = chorismate + phosphate. It participates in metabolic intermediate biosynthesis; chorismate biosynthesis; chorismate from D-erythrose 4-phosphate and phosphoenolpyruvate: step 7/7. Catalyzes the anti-1,4-elimination of the C-3 phosphate and the C-6 proR hydrogen from 5-enolpyruvylshikimate-3-phosphate (EPSP) to yield chorismate, which is the branch point compound that serves as the starting substrate for the three terminal pathways of aromatic amino acid biosynthesis. This reaction introduces a second double bond into the aromatic ring system. This chain is Chorismate synthase, found in Psychrobacter arcticus (strain DSM 17307 / VKM B-2377 / 273-4).